Here is a 910-residue protein sequence, read N- to C-terminus: Staphylococcal nuclease domain-containing protein 1 (910 aa).

N-acetylalanine is present on Ala2. 3 consecutive TNase-like domains span residues 18-166 (TVQR…MWSE), 193-328 (KPVN…IWRD), and 341-496 (KQFV…LHSK). The residue at position 103 (Thr103) is a Phosphothreonine. An N6-acetyllysine modification is found at Lys193. Phosphothreonine is present on residues Thr235 and Thr240. Short sequence motifs (nuclear localization signal) lie at residues 321–325 (RRLRI) and 388–392 (KKLRP). The residue at position 426 (Ser426) is a Phosphoserine. A Glycyl lysine isopeptide (Lys-Gly) (interchain with G-Cter in SUMO2) cross-link involves residue Lys513. The TNase-like 4 domain maps to 525–660 (GRSEAVVEYV…KQRKEKVWAH (136 aa)). Lys641 carries the N6-acetyllysine modification. The residue at position 645 (Ser645) is a Phosphoserine. Residues 729–787 (APRRGEFCIAKFVDGEWYRARVEKVESPAKVHVFYIDYGNREILPSTRLGTLPPAFSTR) form the Tudor domain. At Thr779 the chain carries Phosphothreonine. Phosphoserine is present on residues Ser785 and Ser909.

In terms of assembly, forms a ternary complex with STAT6 and POLR2A. Associates with the RNA-induced silencing complex (RISC). Interacts with the RISC components AGO2, FMR1 and TNRC6A. Interacts with GTF2E1 and GTF2E2. Interacts with PIM1. Interacts with STAT5. Interacts with SYT11 (via C2 2 domain); the interaction with SYT11 is direct. Phosphorylated by PIM1 in vitro.

The protein localises to the cytoplasm. Its subcellular location is the nucleus. It is found in the melanosome. It catalyses the reaction Endonucleolytic cleavage to nucleoside 3'-phosphates and 3'-phosphooligonucleotide end-products.. In terms of biological role, endonuclease that mediates miRNA decay of both protein-free and AGO2-loaded miRNAs. As part of its function in miRNA decay, regulates mRNAs involved in G1-to-S phase transition. Functions as a bridging factor between STAT6 and the basal transcription factor. Plays a role in PIM1 regulation of MYB activity. Functions as a transcriptional coactivator for STAT5. This Mus musculus (Mouse) protein is Staphylococcal nuclease domain-containing protein 1 (Snd1).